Here is a 270-residue protein sequence, read N- to C-terminus: tRNA pseudouridine synthase A (270 aa).

The Nucleophile role is filled by D51. Residue Y109 coordinates substrate.

This sequence belongs to the tRNA pseudouridine synthase TruA family. In terms of assembly, homodimer.

The enzyme catalyses uridine(38/39/40) in tRNA = pseudouridine(38/39/40) in tRNA. Functionally, formation of pseudouridine at positions 38, 39 and 40 in the anticodon stem and loop of transfer RNAs. This is tRNA pseudouridine synthase A from Burkholderia lata (strain ATCC 17760 / DSM 23089 / LMG 22485 / NCIMB 9086 / R18194 / 383).